Here is a 484-residue protein sequence, read N- to C-terminus: Cobyric acid synthase (484 aa).

One can recognise a GATase cobBQ-type domain in the interval 251-438 (ALKIAVPVLP…LHGLFCSDAY (188 aa)). C333 serves as the catalytic Nucleophile. H430 is a catalytic residue.

It belongs to the CobB/CobQ family. CobQ subfamily.

It participates in cofactor biosynthesis; adenosylcobalamin biosynthesis. In terms of biological role, catalyzes amidations at positions B, D, E, and G on adenosylcobyrinic A,C-diamide. NH(2) groups are provided by glutamine, and one molecule of ATP is hydrogenolyzed for each amidation. This is Cobyric acid synthase from Rhizobium rhizogenes (strain K84 / ATCC BAA-868) (Agrobacterium radiobacter).